The following is a 438-amino-acid chain: NADH-quinone oxidoreductase subunit D (438 aa).

The protein belongs to the complex I 49 kDa subunit family. NDH-1 is composed of 14 different subunits. Subunits NuoB, C, D, E, F, and G constitute the peripheral sector of the complex.

It localises to the cell membrane. It catalyses the reaction a quinone + NADH + 5 H(+)(in) = a quinol + NAD(+) + 4 H(+)(out). In terms of biological role, NDH-1 shuttles electrons from NADH, via FMN and iron-sulfur (Fe-S) centers, to quinones in the respiratory chain. The immediate electron acceptor for the enzyme in this species is believed to be a menaquinone. Couples the redox reaction to proton translocation (for every two electrons transferred, four hydrogen ions are translocated across the cytoplasmic membrane), and thus conserves the redox energy in a proton gradient. The sequence is that of NADH-quinone oxidoreductase subunit D from Rhodococcus jostii (strain RHA1).